Here is a 215-residue protein sequence, read N- to C-terminus: uncharacterized protein (215 aa).

The next 5 helical transmembrane spans lie at 1–21, 36–56, 67–87, 92–112, and 118–138; these read MTAE…AIGM, VLIG…FADV, SRIA…NILV, IVGL…MVIG, and LGIY…QLTF.

Belongs to the MgtC/SapB family.

The protein localises to the cell inner membrane. This is an uncharacterized protein from Escherichia coli O157:H7.